The following is a 544-amino-acid chain: Chaperonin GroEL (544 aa).

ATP is bound by residues 29–32 (TLGP), Lys50, 86–90 (DGTTT), Gly413, 479–481 (DAA), and Asp495.

It belongs to the chaperonin (HSP60) family. As to quaternary structure, forms a cylinder of 14 subunits composed of two heptameric rings stacked back-to-back. Interacts with the co-chaperonin GroES.

The protein resides in the cytoplasm. It catalyses the reaction ATP + H2O + a folded polypeptide = ADP + phosphate + an unfolded polypeptide.. Its function is as follows. Together with its co-chaperonin GroES, plays an essential role in assisting protein folding. The GroEL-GroES system forms a nano-cage that allows encapsulation of the non-native substrate proteins and provides a physical environment optimized to promote and accelerate protein folding. The chain is Chaperonin GroEL from Borrelia duttonii (strain Ly).